The sequence spans 179 residues: Interleukin-22 (179 aa).

Positions 1–33 (MAVLQKSMSFSLMGTLAASCLLLIALWAQEANA) are cleaved as a signal peptide. Disulfide bonds link C40–C132 and C89–C178. 3 N-linked (GlcNAc...) asparagine glycosylation sites follow: N54, N68, and N97.

Belongs to the IL-10 family.

It is found in the secreted. In terms of biological role, cytokine that plays a critical role in modulating tissue responses during inflammation. Plays an essential role in the regeneration of epithelial cells to maintain barrier function after injury and for the prevention of further tissue damage. Unlike most of the cytokines, has no effect on immune cells. Signals through a heterodimeric receptor composed of two subunits, the specific receptor IL22RA1 which is present on non-immune cells in many organs and the shared subunit IL10RB. Ligation of IL22RA1 with IL22 induces activation of the tyrosine kinases JAK1 and TYK2, which in turn activates STAT3. In turn, promotes cell survival and proliferation through STAT3, ERK1/2 and PI3K/AKT pathways. Promotes phosphorylation of GSK3B at 'Ser-9' and CTTN. Promotes epithelial cell spreading. The polypeptide is Interleukin-22 (Il22) (Mus musculus (Mouse)).